We begin with the raw amino-acid sequence, 389 residues long: S-adenosylmethionine synthase (389 aa).

H16 lines the ATP pocket. Mg(2+) is bound at residue D18. E44 contributes to the K(+) binding site. Residues E57 and Q100 each contribute to the L-methionine site. Positions 100–110 (QSPDIAQGVDE) are flexible loop. ATP-binding positions include 167–169 (DAK), 233–234 (RF), D242, 248–249 (RK), A265, and K269. D242 lines the L-methionine pocket. L-methionine is bound at residue K273.

It belongs to the AdoMet synthase family. In terms of assembly, homotetramer; dimer of dimers. The cofactor is Mg(2+). Requires K(+) as cofactor.

The protein resides in the cytoplasm. It catalyses the reaction L-methionine + ATP + H2O = S-adenosyl-L-methionine + phosphate + diphosphate. It participates in amino-acid biosynthesis; S-adenosyl-L-methionine biosynthesis; S-adenosyl-L-methionine from L-methionine: step 1/1. Its function is as follows. Catalyzes the formation of S-adenosylmethionine (AdoMet) from methionine and ATP. The overall synthetic reaction is composed of two sequential steps, AdoMet formation and the subsequent tripolyphosphate hydrolysis which occurs prior to release of AdoMet from the enzyme. In Acidithiobacillus ferrooxidans (strain ATCC 23270 / DSM 14882 / CIP 104768 / NCIMB 8455) (Ferrobacillus ferrooxidans (strain ATCC 23270)), this protein is S-adenosylmethionine synthase.